The following is a 182-amino-acid chain: Dirigent protein 5 (182 aa).

Positions 1 to 23 (MVGQMKSFLFLFVFLVLTKTVIS) are cleaved as a signal peptide. Residues C35 and C181 are joined by a disulfide bond. N54 and N118 each carry an N-linked (GlcNAc...) asparagine glycan.

It belongs to the plant dirigent protein family. In terms of assembly, homodimer. As to expression, confined to shoot meristem, vascular region of cotyledons and siliques abscission zone.

Its subcellular location is the secreted. The protein resides in the extracellular space. The protein localises to the apoplast. In terms of biological role, dirigent proteins impart stereoselectivity on the phenoxy radical-coupling reaction, yielding optically active lignans from two molecules of coniferyl alcohol in the biosynthesis of lignans, flavonolignans, and alkaloids and thus plays a central role in plant secondary metabolism. Enantiocomplementary dirigent protein that mediates the laccase-catalyzed enantioselective oxidative phenol coupling of (E)-coniferyl alcohol to (-)-pinoresinol. The polypeptide is Dirigent protein 5 (DIR5) (Arabidopsis thaliana (Mouse-ear cress)).